A 599-amino-acid polypeptide reads, in one-letter code: DNA primase (599 aa).

A CHC2-type zinc finger spans residues Cys38–Cys62. The region spanning Asp260–Gly341 is the Toprim domain. Residues Glu266, Asp310, and Asp312 each contribute to the Mg(2+) site.

Belongs to the DnaG primase family. In terms of assembly, monomer. Interacts with DnaB. Zn(2+) is required as a cofactor. Requires Mg(2+) as cofactor.

The catalysed reaction is ssDNA + n NTP = ssDNA/pppN(pN)n-1 hybrid + (n-1) diphosphate.. Functionally, RNA polymerase that catalyzes the synthesis of short RNA molecules used as primers for DNA polymerase during DNA replication. This Staphylococcus aureus (strain MRSA252) protein is DNA primase.